The following is a 266-amino-acid chain: Luciferase (266 aa).

The helical transmembrane segment at 22–41 (GLATACCAVAVASAIAFPYI) threads the bilayer.

This sequence belongs to the fungal luciferase family.

The protein localises to the membrane. The enzyme catalyses 3-hydroxyhispidin + O2 = (E)-caffeoylpyruvate + hnu + CO2. It carries out the reaction 3-hydroxyhispidin + O2 = 4-[(E)-2-(3,4-dihydroxyphenyl)ethenyl]-1,7-dihydroxy-2,3,5-trioxabicyclo[2.2.2]oct-7-en-6-one. Its function is as follows. Luciferase; part of the gene cluster that mediates the fungal bioluminescence cycle. Uses the fungal luciferin 3-hydroxyhispidin as a substrate to produce an endoperoxide as a high-energy intermediate with decomposition that yields oxyluciferin (also known as caffeoylpyruvate) and light emission. The fungal bioluminescence cycle begins with the hispidin synthetase that catalyzes the formation of hispidin which is further hydroxylated by the hispidin-3-hydroxylase, yielding the fungal luciferin 3-hydroxyhispidin. The luciferase then produces an endoperoxide as a high-energy intermediate with decomposition that yields oxyluciferin and light emission. Oxyluciferin can be recycled to caffeic acid by caffeoylpyruvate hydrolase. The chain is Luciferase from Armillaria ostoyae (Armillaria root rot fungus).